The chain runs to 449 residues: 3-phosphoshikimate 1-carboxyvinyltransferase (449 aa).

The interval 1 to 26 (MNHHLPSRPARSRQSQGLKGNLRVPG) is disordered. Residues lysine 28, serine 29, and arginine 33 each contribute to the 3-phosphoshikimate site. Phosphoenolpyruvate is bound at residue lysine 28. Residues glycine 100 and arginine 128 each contribute to the phosphoenolpyruvate site. The 3-phosphoshikimate site is built by serine 174, glutamine 176, aspartate 327, and lysine 354. Glutamine 176 is a phosphoenolpyruvate binding site. The Proton acceptor role is filled by aspartate 327. Phosphoenolpyruvate contacts are provided by arginine 358 and arginine 403.

This sequence belongs to the EPSP synthase family. In terms of assembly, monomer.

Its subcellular location is the cytoplasm. The catalysed reaction is 3-phosphoshikimate + phosphoenolpyruvate = 5-O-(1-carboxyvinyl)-3-phosphoshikimate + phosphate. It participates in metabolic intermediate biosynthesis; chorismate biosynthesis; chorismate from D-erythrose 4-phosphate and phosphoenolpyruvate: step 6/7. Functionally, catalyzes the transfer of the enolpyruvyl moiety of phosphoenolpyruvate (PEP) to the 5-hydroxyl of shikimate-3-phosphate (S3P) to produce enolpyruvyl shikimate-3-phosphate and inorganic phosphate. In Chelativorans sp. (strain BNC1), this protein is 3-phosphoshikimate 1-carboxyvinyltransferase.